We begin with the raw amino-acid sequence, 300 residues long: Tyrosine recombinase XerC (300 aa).

Positions 2–88 (TQEGQLEKRF…SLRSFYTFLL (87 aa)) constitute a Core-binding (CB) domain. Positions 109–294 (RLPKFFYSEE…TKEHLKSTYM (186 aa)) constitute a Tyr recombinase domain. Catalysis depends on residues R150, K174, H246, R249, and H272. Y281 functions as the O-(3'-phospho-DNA)-tyrosine intermediate in the catalytic mechanism.

The protein belongs to the 'phage' integrase family. XerC subfamily. In terms of assembly, forms a cyclic heterotetrameric complex composed of two molecules of XerC and two molecules of XerD.

It localises to the cytoplasm. Functionally, site-specific tyrosine recombinase, which acts by catalyzing the cutting and rejoining of the recombining DNA molecules. The XerC-XerD complex is essential to convert dimers of the bacterial chromosome into monomers to permit their segregation at cell division. It also contributes to the segregational stability of plasmids. The protein is Tyrosine recombinase XerC of Listeria innocua serovar 6a (strain ATCC BAA-680 / CLIP 11262).